The sequence spans 1317 residues: DNA-directed RNA polymerase subunit beta' (1317 aa).

Residues cysteine 60, cysteine 62, cysteine 75, and cysteine 78 each contribute to the Zn(2+) site. Residues aspartate 535, aspartate 537, and aspartate 539 each coordinate Mg(2+). Positions 890, 967, 974, and 977 each coordinate Zn(2+).

It belongs to the RNA polymerase beta' chain family. As to quaternary structure, the RNAP catalytic core consists of 2 alpha, 1 beta, 1 beta' and 1 omega subunit. When a sigma factor is associated with the core the holoenzyme is formed, which can initiate transcription. Mg(2+) serves as cofactor. The cofactor is Zn(2+).

It catalyses the reaction RNA(n) + a ribonucleoside 5'-triphosphate = RNA(n+1) + diphosphate. Its function is as follows. DNA-dependent RNA polymerase catalyzes the transcription of DNA into RNA using the four ribonucleoside triphosphates as substrates. In Nocardia farcinica (strain IFM 10152), this protein is DNA-directed RNA polymerase subunit beta'.